The sequence spans 681 residues: Macrolide export ATP-binding/permease protein MacB (681 aa).

Residues 6-244 (LKLAAVTRRF…FAEVGVGAAA (239 aa)) enclose the ABC transporter domain. Residue 42 to 49 (GASGSGKS) coordinates ATP. Low complexity predominate over residues 246–273 (TETAADTRSAPASGDAPPPANNDTAADP). The interval 246–298 (TETAADTRSAPASGDAPPPANNDTAADPAPAPDASPPAPAVSPKHAGWRGSRS) is disordered. The segment covering 274–285 (APAPDASPPAPA) has biased composition (pro residues). Helical transmembrane passes span 306-326 (CLTMLGIIIGITSVVSIVAVG), 554-574 (LTLLLSLIAVISLVVGGIGVM), 611-631 (LVCLLGGTIGIALSFGLGALF), and 644-664 (AGAIVTAFVCSTLTGVIFGFM).

Belongs to the ABC transporter superfamily. Macrolide exporter (TC 3.A.1.122) family. In terms of assembly, homodimer.

It is found in the cell inner membrane. Non-canonical ABC transporter that contains transmembrane domains (TMD), which form a pore in the inner membrane, and an ATP-binding domain (NBD), which is responsible for energy generation. Confers resistance against macrolides. This chain is Macrolide export ATP-binding/permease protein MacB, found in Burkholderia orbicola (strain AU 1054).